The following is a 562-amino-acid chain: Zinc finger protein 579 (562 aa).

Positions 1-11 (MDPQPPPPAQG) are enriched in pro residues. Residues 1–45 (MDPQPPPPAQGSPPHRDRGRGRGRGRGRGRGRGRGRGGAGAPRAP) form a disordered region. The span at 17–35 (DRGRGRGRGRGRGRGRGRG) shows a compositional bias: basic residues. C2H2-type zinc fingers lie at residues 46–68 (LPCPTCGRLFRFPYYLSRHRLSH), 74–96 (HACPLCPKAFRRPAHLSRHLRGH), and 102–125 (LRCAACPRTFPEPAQLRRHLAQEH). R94 carries the post-translational modification Omega-N-methylarginine. Disordered stretches follow at residues 120-154 (HLAQEHAGSEVDLSTQRAVKEEPEASWGPQDEGVE) and 166-199 (EEATTQWPAGDSAPAAVPTSTDPRESEAKEAEAG). A compositionally biased stretch (basic and acidic residues) spans 187 to 197 (DPRESEAKEAE). A Phosphoserine modification is found at S191. 2 C2H2-type zinc fingers span residues 267–289 (HQCSICLKAFARPWSLSRHRLVH) and 295–317 (FVCPDCGLAFRLASYLRQHRRVH). Residues 321 to 377 (SLLAPLPGAGKKDDKASGGRNSGKGPEGGEGAECGGASEGGEGGHNGGDATPARPPA) are disordered. The span at 340 to 367 (RNSGKGPEGGEGAECGGASEGGEGGHNG) shows a compositional bias: gly residues. C2H2-type zinc fingers lie at residues 382–404 (FWCPECGKGFRRRAHLRQHGVTH), 410–432 (FQCVRCQREFKRLADLARHAQVH), and 439–461 (HPCPRCPRRFSRAYSLLRHQRCH). S486 is modified (phosphoserine). The disordered stretch occupies residues 505-530 (AHIKEEPPSPGTPPQSPPAPPVFLSA). Residues 512 to 525 (PSPGTPPQSPPAPP) are compositionally biased toward pro residues.

Belongs to the krueppel C2H2-type zinc-finger protein family.

The protein resides in the nucleus. Functionally, may be involved in transcriptional regulation. The protein is Zinc finger protein 579 (Znf579) of Mus musculus (Mouse).